The primary structure comprises 172 residues: RNA pyrophosphohydrolase (172 aa).

The 144-residue stretch at 6–149 (GYRPNVGIIL…KRDVYRMALK (144 aa)) folds into the Nudix hydrolase domain. The short motif at 38–59 (GGIKYGESPEQAMYRELMEEVG) is the Nudix box element.

Belongs to the Nudix hydrolase family. RppH subfamily. It depends on a divalent metal cation as a cofactor.

In terms of biological role, accelerates the degradation of transcripts by removing pyrophosphate from the 5'-end of triphosphorylated RNA, leading to a more labile monophosphorylated state that can stimulate subsequent ribonuclease cleavage. This chain is RNA pyrophosphohydrolase, found in Methylobacillus flagellatus (strain ATCC 51484 / DSM 6875 / VKM B-1610 / KT).